The following is a 609-amino-acid chain: ATP-dependent lipid A-core flippase (609 aa).

A run of 6 helical transmembrane segments spans residues 47–67 (LLAA…IYLI), 88–108 (ILML…VGSF), 167–187 (AIIT…VMFV), 190–210 (WQLS…ISII), 279–299 (VIQI…AIFG), and 305–325 (GSSW…AAIL). One can recognise an ABC transmembrane type-1 domain in the interval 47–340 (LLAAIGSIFF…LTKVNVVIQK (294 aa)). The 235-residue stretch at 372-606 (VTIKDLSFAF…GGLYTRLYQS (235 aa)) folds into the ABC transporter domain. 404–411 (GKSGSGKT) serves as a coordination point for ATP.

The protein belongs to the ABC transporter superfamily. Lipid exporter (TC 3.A.1.106) family. In terms of assembly, homodimer.

It is found in the cell inner membrane. The enzyme catalyses ATP + H2O + lipid A-core oligosaccharideSide 1 = ADP + phosphate + lipid A-core oligosaccharideSide 2.. Its function is as follows. Involved in lipopolysaccharide (LPS) biosynthesis. Translocates lipid A-core from the inner to the outer leaflet of the inner membrane. Transmembrane domains (TMD) form a pore in the inner membrane and the ATP-binding domain (NBD) is responsible for energy generation. The chain is ATP-dependent lipid A-core flippase from Francisella tularensis subsp. holarctica (strain LVS).